The chain runs to 245 residues: Small ribosomal subunit protein uS2 (245 aa).

This sequence belongs to the universal ribosomal protein uS2 family.

The protein is Small ribosomal subunit protein uS2 of Pseudomonas fluorescens (strain Pf0-1).